A 484-amino-acid polypeptide reads, in one-letter code: Cysteine--tRNA ligase (484 aa).

Residue cysteine 29 participates in Zn(2+) binding. The 'HIGH' region signature appears at 31–41 (ATVQGMPHVGH). 3 residues coordinate Zn(2+): cysteine 227, histidine 252, and glutamate 256. A 'KMSKS' region motif is present at residues 283–287 (KMSKS). Lysine 286 contacts ATP.

Belongs to the class-I aminoacyl-tRNA synthetase family. Monomer. Zn(2+) serves as cofactor.

It is found in the cytoplasm. The catalysed reaction is tRNA(Cys) + L-cysteine + ATP = L-cysteinyl-tRNA(Cys) + AMP + diphosphate. In Paenarthrobacter aurescens (strain TC1), this protein is Cysteine--tRNA ligase.